Here is a 383-residue protein sequence, read N- to C-terminus: Sterol 24-C-methyltransferase ERG6 (383 aa).

Serine 2 carries the N-acetylserine modification. Serine 99 bears the Phosphoserine mark.

This sequence belongs to the class I-like SAM-binding methyltransferase superfamily. Erg6/SMT family. In terms of assembly, interacts with ERG28.

The protein resides in the microsome. Its subcellular location is the mitochondrion. The catalysed reaction is zymosterol + S-adenosyl-L-methionine = fecosterol + S-adenosyl-L-homocysteine + H(+). The protein operates within steroid metabolism; ergosterol biosynthesis; ergosterol from zymosterol: step 1/5. Its function is as follows. Sterol 24-C-methyltransferase; part of the third module of ergosterol biosynthesis pathway that includes the late steps of the pathway. ERG6 catalyzes the methyl transfer from S-adenosyl-methionine to the C-24 of zymosterol to form fecosterol. The third module or late pathway involves the ergosterol synthesis itself through consecutive reactions that mainly occur in the endoplasmic reticulum (ER) membrane. Firstly, the squalene synthase ERG9 catalyzes the condensation of 2 farnesyl pyrophosphate moieties to form squalene, which is the precursor of all steroids. Squalene synthase is crucial for balancing the incorporation of farnesyl diphosphate (FPP) into sterol and nonsterol isoprene synthesis. Secondly, the squalene epoxidase ERG1 catalyzes the stereospecific oxidation of squalene to (S)-2,3-epoxysqualene, which is considered to be a rate-limiting enzyme in steroid biosynthesis. Then, the lanosterol synthase ERG7 catalyzes the cyclization of (S)-2,3 oxidosqualene to lanosterol, a reaction that forms the sterol core. In the next steps, lanosterol is transformed to zymosterol through a complex process involving various demethylation, reduction and desaturation reactions. The lanosterol 14-alpha-demethylase ERG11 (also known as CYP51) catalyzes C14-demethylation of lanosterol to produce 4,4'-dimethyl cholesta-8,14,24-triene-3-beta-ol, which is critical for ergosterol biosynthesis. The C-14 reductase ERG24 reduces the C14=C15 double bond of 4,4-dimethyl-cholesta-8,14,24-trienol to produce 4,4-dimethyl-cholesta-8,24-dienol. 4,4-dimethyl-cholesta-8,24-dienol is substrate of the C-4 demethylation complex ERG25-ERG26-ERG27 in which ERG25 catalyzes the three-step monooxygenation required for the demethylation of 4,4-dimethyl and 4alpha-methylsterols, ERG26 catalyzes the oxidative decarboxylation that results in a reduction of the 3-beta-hydroxy group at the C-3 carbon to an oxo group, and ERG27 is responsible for the reduction of the keto group on the C-3. ERG28 has a role as a scaffold to help anchor ERG25, ERG26 and ERG27 to the endoplasmic reticulum and ERG29 regulates the activity of the iron-containing C4-methylsterol oxidase ERG25. Then, the sterol 24-C-methyltransferase ERG6 catalyzes the methyl transfer from S-adenosyl-methionine to the C-24 of zymosterol to form fecosterol. The C-8 sterol isomerase ERG2 catalyzes the reaction which results in unsaturation at C-7 in the B ring of sterols and thus converts fecosterol to episterol. The sterol-C5-desaturase ERG3 then catalyzes the introduction of a C-5 double bond in the B ring to produce 5-dehydroepisterol. The C-22 sterol desaturase ERG5 further converts 5-dehydroepisterol into ergosta-5,7,22,24(28)-tetraen-3beta-ol by forming the C-22(23) double bond in the sterol side chain. Finally, ergosta-5,7,22,24(28)-tetraen-3beta-ol is substrate of the C-24(28) sterol reductase ERG4 to produce ergosterol. The chain is Sterol 24-C-methyltransferase ERG6 from Saccharomyces cerevisiae (strain ATCC 204508 / S288c) (Baker's yeast).